The sequence spans 293 residues: Bifunctional protein FolD (293 aa).

NADP(+) contacts are provided by residues 165–167, Thr-192, and Val-233; that span reads GRG.

The protein belongs to the tetrahydrofolate dehydrogenase/cyclohydrolase family. Homodimer.

The enzyme catalyses (6R)-5,10-methylene-5,6,7,8-tetrahydrofolate + NADP(+) = (6R)-5,10-methenyltetrahydrofolate + NADPH. It carries out the reaction (6R)-5,10-methenyltetrahydrofolate + H2O = (6R)-10-formyltetrahydrofolate + H(+). It participates in one-carbon metabolism; tetrahydrofolate interconversion. In terms of biological role, catalyzes the oxidation of 5,10-methylenetetrahydrofolate to 5,10-methenyltetrahydrofolate and then the hydrolysis of 5,10-methenyltetrahydrofolate to 10-formyltetrahydrofolate. The protein is Bifunctional protein FolD of Streptomyces griseus subsp. griseus (strain JCM 4626 / CBS 651.72 / NBRC 13350 / KCC S-0626 / ISP 5235).